Here is a 181-residue protein sequence, read N- to C-terminus: UPF0302 protein LMHCC_0635 (181 aa).

Belongs to the UPF0302 family.

The chain is UPF0302 protein LMHCC_0635 from Listeria monocytogenes serotype 4a (strain HCC23).